A 427-amino-acid polypeptide reads, in one-letter code: Sialic acid TRAP transporter large permease protein SiaM (427 aa).

The next 12 membrane-spanning stretches (helical) occupy residues 11-31 (LLFA…AFLI), 52-72 (FTLL…SAGI), 82-102 (SLVG…SLLF), 140-160 (ASCI…YGVV), 165-185 (IGAL…ALMV), 214-234 (AFLS…GKFT), 246-266 (ALFL…IEIL), 270-290 (VNTT…GWIV), 301-321 (DYFL…NLLL), 322-342 (LFLG…PFLV), 348-368 (VGID…IGIL), and 394-414 (VLPL…FPQF).

Belongs to the TRAP transporter large permease family. As to quaternary structure, the complex comprises the extracytoplasmic solute receptor protein SiaP, and the two transmembrane proteins SiaQ and SiaM. SiaQ and SiaM form a tight 1:1 complex.

It localises to the cell inner membrane. Part of the tripartite ATP-independent periplasmic (TRAP) transport system SiaPQM that catalyzes unidirectional Na(+)-dependent sialic acid uptake. This chain is Sialic acid TRAP transporter large permease protein SiaM, found in Vibrio cholerae serotype O1 (strain ATCC 39315 / El Tor Inaba N16961).